A 405-amino-acid polypeptide reads, in one-letter code: Methylamine dehydrogenase heavy chain (405 aa).

An N-terminal signal peptide occupies residues 1–36 (MTTFDHPSMIRQPKPTGLAGGLVLAALMLSSSLALA).

The protein belongs to the aromatic amine dehydrogenase heavy chain family. In terms of assembly, tetramer of two light and two heavy chains.

It is found in the periplasm. It catalyses the reaction 2 oxidized [amicyanin] + methylamine + H2O = 2 reduced [amicyanin] + formaldehyde + NH4(+) + 2 H(+). In terms of biological role, methylamine dehydrogenase carries out the oxidation of methylamine. Electrons are passed from methylamine dehydrogenase to amicyanin. In Methylophilus methylotrophus (Bacterium W3A1), this protein is Methylamine dehydrogenase heavy chain (mauB).